Reading from the N-terminus, the 170-residue chain is Plastocyanin, chloroplastic (170 aa).

Residues methionine 1–alanine 71 constitute a chloroplast transit peptide. A Plastocyanin-like domain is found at leucine 72–asparagine 170. Cu cation is bound by residues histidine 108, cysteine 155, histidine 158, and methionine 163.

The protein belongs to the plastocyanin family. Cu(2+) serves as cofactor.

The protein localises to the plastid. The protein resides in the chloroplast thylakoid membrane. In terms of biological role, participates in electron transfer between P700 and the cytochrome b6-f complex in photosystem I. The protein is Plastocyanin, chloroplastic (PETE) of Solanum lycopersicum (Tomato).